We begin with the raw amino-acid sequence, 498 residues long: Glycerol kinase (498 aa).

Residue Thr11 participates in ADP binding. Residues Thr11, Ser12, and Ser13 each coordinate ATP. Thr11 provides a ligand contact to sn-glycerol 3-phosphate. Arg15 is an ADP binding site. Sn-glycerol 3-phosphate-binding residues include Arg81, Glu82, Tyr133, and Asp242. The glycerol site is built by Arg81, Glu82, Tyr133, Asp242, and Gln243. 2 residues coordinate ADP: Thr264 and Gly307. Residues Thr264, Gly307, Gln311, and Gly412 each coordinate ATP. ADP-binding residues include Gly412 and Asn416.

It belongs to the FGGY kinase family.

It carries out the reaction glycerol + ATP = sn-glycerol 3-phosphate + ADP + H(+). Its pathway is polyol metabolism; glycerol degradation via glycerol kinase pathway; sn-glycerol 3-phosphate from glycerol: step 1/1. With respect to regulation, inhibited by fructose 1,6-bisphosphate (FBP). Key enzyme in the regulation of glycerol uptake and metabolism. Catalyzes the phosphorylation of glycerol to yield sn-glycerol 3-phosphate. This chain is Glycerol kinase, found in Acidovorax sp. (strain JS42).